Reading from the N-terminus, the 429-residue chain is Enolase (429 aa).

A (2R)-2-phosphoglycerate-binding site is contributed by Q162. The active-site Proton donor is E204. Mg(2+) is bound by residues D241, E283, and D310. Positions 335, 364, 365, and 386 each coordinate (2R)-2-phosphoglycerate. Catalysis depends on K335, which acts as the Proton acceptor.

It belongs to the enolase family. Requires Mg(2+) as cofactor.

Its subcellular location is the cytoplasm. The protein resides in the secreted. It is found in the cell surface. The enzyme catalyses (2R)-2-phosphoglycerate = phosphoenolpyruvate + H2O. It participates in carbohydrate degradation; glycolysis; pyruvate from D-glyceraldehyde 3-phosphate: step 4/5. Catalyzes the reversible conversion of 2-phosphoglycerate (2-PG) into phosphoenolpyruvate (PEP). It is essential for the degradation of carbohydrates via glycolysis. This Mycobacterium leprae (strain TN) protein is Enolase.